A 102-amino-acid chain; its full sequence is Large ribosomal subunit protein bL21 (102 aa).

The protein belongs to the bacterial ribosomal protein bL21 family. Part of the 50S ribosomal subunit. Contacts protein L20.

Functionally, this protein binds to 23S rRNA in the presence of protein L20. The polypeptide is Large ribosomal subunit protein bL21 (Bifidobacterium longum (strain DJO10A)).